We begin with the raw amino-acid sequence, 312 residues long: Olfactory receptor 51I2 (312 aa).

Residues 1-25 (MGLFNVTHPAFFLLTGIPGLESSHS) are Extracellular-facing. N-linked (GlcNAc...) asparagine glycosylation is present at Asn-5. A helical transmembrane segment spans residues 26–46 (WLSGPLCVMYAVALGGNTVIL). Topologically, residues 47-54 (QAVRVEPS) are cytoplasmic. The chain crosses the membrane as a helical span at residues 55–75 (LHEPMYYFLSMLSFSDVAISM). Residues 76 to 99 (ATLPTVLRTFCLNARNITFDACLI) lie on the Extracellular side of the membrane. Residues Cys-97 and Cys-189 are joined by a disulfide bond. A helical transmembrane segment spans residues 100–120 (QMFLIHFFSMMESGILLAMSF). Residues 121–139 (DRYVAICDPLRYATVLTTE) lie on the Cytoplasmic side of the membrane. Residues 140 to 160 (VIAAMGLGAAARSFITLFPLP) form a helical membrane-spanning segment. Over 161-196 (FLIKRLPICRSNVLSHSYCLHPDMMRLACADISINS) the chain is Extracellular. A helical transmembrane segment spans residues 197 to 217 (IYGLFVLVSTFGMDLFFIFLS). At 218 to 237 (YVLILRSVMATASREERLKA) the chain is on the cytoplasmic side. A helical transmembrane segment spans residues 238–258 (LNTCVSHILAVLAFYVPMIGV). The Extracellular segment spans residues 259 to 273 (STVHRFGKHVPCYIH). Residues 274-294 (VLMSNVYLFVPPVLNPLIYSA) traverse the membrane as a helical segment. The Cytoplasmic segment spans residues 295 to 312 (KTKEIRRAIFRMFHHIKI).

It belongs to the G-protein coupled receptor 1 family.

The protein localises to the cell membrane. In terms of biological role, odorant receptor. The polypeptide is Olfactory receptor 51I2 (OR51I2) (Homo sapiens (Human)).